The following is a 584-amino-acid chain: Proteasome-associated ATPase (584 aa).

Residues 8–90 (RHAERDRDEL…KEEVDRLSQP (83 aa)) adopt a coiled-coil conformation. 272 to 277 (GCGKTL) provides a ligand contact to ATP. The tract at residues 583–584 (YL) is docks into pockets in the proteasome alpha-ring.

Belongs to the AAA ATPase family. Homohexamer. Assembles into a hexameric ring structure that caps the 20S proteasome core. Strongly interacts with the prokaryotic ubiquitin-like protein Pup through a hydrophobic interface; the interacting region of ARC lies in its N-terminal coiled-coil domain. There is one Pup binding site per ARC hexamer ring. Upon ATP-binding, the C-terminus of ARC interacts with the alpha-rings of the proteasome core, possibly by binding to the intersubunit pockets.

It functions in the pathway protein degradation; proteasomal Pup-dependent pathway. In terms of biological role, ATPase which is responsible for recognizing, binding, unfolding and translocation of pupylated proteins into the bacterial 20S proteasome core particle. May be essential for opening the gate of the 20S proteasome via an interaction with its C-terminus, thereby allowing substrate entry and access to the site of proteolysis. Thus, the C-termini of the proteasomal ATPase may function like a 'key in a lock' to induce gate opening and therefore regulate proteolysis. This is Proteasome-associated ATPase from Thermobifida fusca (strain YX).